A 209-amino-acid polypeptide reads, in one-letter code: Claudin-4 (209 aa).

At 1 to 7 (MASMGLQ) the chain is on the cytoplasmic side. Residues 1-103 (MASMGLQVMG…GVLLSVVGGK (103 aa)) are interaction with EPHA2. The chain crosses the membrane as a helical span at residues 8–28 (VMGIALAVLGWLAVMLCCALP). Residues 29-81 (MWRVTAFIGSNIVTSQTIWEGLWMNCVVQSTGQMQCKVYDSLLALPQDLQAAR) are Extracellular-facing. Cysteine 54 and cysteine 64 form a disulfide bridge. The chain crosses the membrane as a helical span at residues 82 to 102 (ALVIISIIVAALGVLLSVVGG). Topologically, residues 103-117 (KCTNCLEDESAKAKT) are cytoplasmic. A helical membrane pass occupies residues 118–138 (MIVAGVVFLLAGLMVIVPVSW). Residues 139–160 (TAHNIIQDFYNPLVASGQKREM) are Extracellular-facing. A helical transmembrane segment spans residues 161 to 181 (GASLYVGWAASGLLLLGGGLL). Over 182–209 (CCNCPPRTDKPYSAKYSAARSAAASNYV) the chain is Cytoplasmic. Position 208 is a phosphotyrosine; by EPHA2 (tyrosine 208). The tract at residues 208–209 (YV) is interactions with TJP1, TJP2 and TJP3.

The protein belongs to the claudin family. In terms of assembly, can form heteropolymeric strands with other claudins. Interacts with CLDN8. Interacts with CLDN1. Directly interacts with TJP1/ZO-1. Interacts with TJP2/ZO-2 and TJP3/ZO-3. Interacts with EPHA2; phosphorylates CLDN4 and may regulate tight junctions. As to quaternary structure, (Microbial infection) Interacts (via both extracellular domains) with Clostridium perfringens enterotoxin CPE; the interaction may disrupt claudin assembly in tight junctions. Post-translationally, phosphorylated. Phosphorylation by EPHA2 is stimulated by EFNA1 and alters interaction with TJP1.

The protein resides in the cell junction. It is found in the tight junction. The protein localises to the cell membrane. It catalyses the reaction chloride(in) = chloride(out). The enzyme catalyses bromide(in) = bromide(out). The catalysed reaction is iodide(out) = iodide(in). It carries out the reaction fluoride(in) = fluoride(out). In terms of biological role, can associate with other claudins to regulate tight junction structural and functional strand dynamics. May coassemble with CLDN8 into tight junction strands containing anion-selective channels that convey paracellular chloride permeability in renal collecting ducts. May integrate into CLDN3 strands to modulate localized tight junction barrier properties. May disrupt strand assembly of channel-forming CLDN2 and CLDN15 and inhibit cation conductance. Cannot form tight junction strands on its own. In Homo sapiens (Human), this protein is Claudin-4.